Reading from the N-terminus, the 140-residue chain is Vacuolar protein sorting-associated protein 55 homolog (140 aa).

At 1–16 (MADVPGYLRTCLDMGK) the chain is on the cytoplasmic side. A helical transmembrane segment spans residues 17–37 (IAFLAILVSTGIVLQILACAL). The Lumenal segment spans residues 38–40 (FNN). Residues 41–61 (WWPMLSVIMYVLLPMPLLFFG) form a helical membrane-spanning segment. The Cytoplasmic portion of the chain corresponds to 62–75 (GSDSTSLFNESDNS). The helical transmembrane segment at 76-98 (WINAAKFLTGASAVGSVAIPSIL) threads the bilayer. Over 99–108 (KHAGLIGWGA) the chain is Lumenal. A helical membrane pass occupies residues 109-129 (LALDLSSYVVFLVAILGYICI). Topologically, residues 130-140 (GDASDNYYSYI) are cytoplasmic.

The protein belongs to the OB-RGRP/VPS55 family.

The protein resides in the endosome membrane. In terms of biological role, involved in endosomal protein transport. This is Vacuolar protein sorting-associated protein 55 homolog from Arabidopsis thaliana (Mouse-ear cress).